The primary structure comprises 124 residues: Large-conductance mechanosensitive channel (124 aa).

3 helical membrane passes run 14 to 34 (VIDL…VQSL), 37 to 57 (NLIN…NLVF), and 67 to 87 (GSFI…FLIV).

It belongs to the MscL family. Homopentamer.

It is found in the cell membrane. Its function is as follows. Channel that opens in response to stretch forces in the membrane lipid bilayer. May participate in the regulation of osmotic pressure changes within the cell. The protein is Large-conductance mechanosensitive channel of Lactobacillus acidophilus (strain ATCC 700396 / NCK56 / N2 / NCFM).